The following is a 362-amino-acid chain: Isopentenyl-diphosphate delta-isomerase (362 aa).

5–6 (RK) is a substrate binding site. FMN-binding positions include 63-65 (AMT), Ser-93, and Asn-122. A substrate-binding site is contributed by Gln-152. Mg(2+) is bound at residue Glu-153. Residues Lys-184, Thr-214, 259-261 (GIR), and 280-281 (AG) contribute to the FMN site.

This sequence belongs to the IPP isomerase type 2 family. In terms of assembly, homooctamer. Dimer of tetramers. FMN serves as cofactor. Requires NADPH as cofactor. It depends on Mg(2+) as a cofactor.

Its subcellular location is the cytoplasm. It carries out the reaction isopentenyl diphosphate = dimethylallyl diphosphate. Functionally, involved in the biosynthesis of isoprenoids. Catalyzes the 1,3-allylic rearrangement of the homoallylic substrate isopentenyl (IPP) to its allylic isomer, dimethylallyl diphosphate (DMAPP). This chain is Isopentenyl-diphosphate delta-isomerase, found in Nocardia farcinica (strain IFM 10152).